Consider the following 236-residue polypeptide: UPF0257 lipoprotein YnfC (236 aa).

Residues 1–16 form the signal peptide; sequence MKYKLLPCLLAIFLTG. Residue cysteine 17 is the site of N-palmitoyl cysteine attachment. The S-diacylglycerol cysteine moiety is linked to residue cysteine 17.

Belongs to the UPF0257 family.

It localises to the cell membrane. The chain is UPF0257 lipoprotein YnfC (ynfC) from Shigella flexneri.